We begin with the raw amino-acid sequence, 289 residues long: Phosphate import ATP-binding protein PstB 2 (289 aa).

The region spanning 37 to 276 is the ABC transporter domain; it reads LHAKVEAFYY…HTPVIFQNPT (240 aa). 69-76 contacts ATP; that stretch reads GPSGCGKS.

The protein belongs to the ABC transporter superfamily. Phosphate importer (TC 3.A.1.7) family. The complex is composed of two ATP-binding proteins (PstB), two transmembrane proteins (PstC and PstA) and a solute-binding protein (PstS).

It localises to the cell inner membrane. It catalyses the reaction phosphate(out) + ATP + H2O = ADP + 2 phosphate(in) + H(+). In terms of biological role, part of the ABC transporter complex PstSACB involved in phosphate import. Responsible for energy coupling to the transport system. The sequence is that of Phosphate import ATP-binding protein PstB 2 from Trichormus variabilis (strain ATCC 29413 / PCC 7937) (Anabaena variabilis).